The primary structure comprises 68 residues: Putative membrane protein insertion efficiency factor (68 aa).

It belongs to the UPF0161 family.

Its subcellular location is the cell inner membrane. Functionally, could be involved in insertion of integral membrane proteins into the membrane. The sequence is that of Putative membrane protein insertion efficiency factor from Hydrogenobaculum sp. (strain Y04AAS1).